A 375-amino-acid polypeptide reads, in one-letter code: RING-H2 finger protein ATL16 (375 aa).

The interval 1 to 20 is disordered; sequence MDLSNRRNPLRDLSFPPPPP. A helical membrane pass occupies residues 39 to 59; it reads VAVIGILATAFLLVSYYVFVI. The RING-type; atypical zinc finger occupies 138-180; the sequence is CSVCLSEFQDEEKLRIIPNCSHLFHIDCIDVWLQNNANCPLCR. 2 disordered regions span residues 223–266 and 356–375; these read GSDR…DRGG and SFGS…YFEP. Positions 238–257 are enriched in polar residues; that stretch reads QERSNSGYLLNENTQNSISP.

This sequence belongs to the RING-type zinc finger family. ATL subfamily.

Its subcellular location is the membrane. It catalyses the reaction S-ubiquitinyl-[E2 ubiquitin-conjugating enzyme]-L-cysteine + [acceptor protein]-L-lysine = [E2 ubiquitin-conjugating enzyme]-L-cysteine + N(6)-ubiquitinyl-[acceptor protein]-L-lysine.. The protein operates within protein modification; protein ubiquitination. The polypeptide is RING-H2 finger protein ATL16 (ATL16) (Arabidopsis thaliana (Mouse-ear cress)).